The sequence spans 285 residues: Biotin synthase (285 aa).

The region spanning 2–223 is the Radical SAM core domain; the sequence is STRKQIFLCA…RRAHTLLGED (222 aa). Residues Cys20, Cys24, and Cys27 each coordinate [4Fe-4S] cluster. [2Fe-2S] cluster is bound by residues Cys64, Cys99, and Cys157.

Belongs to the radical SAM superfamily. Biotin synthase family. As to quaternary structure, homodimer. [4Fe-4S] cluster serves as cofactor. Requires [2Fe-2S] cluster as cofactor.

The enzyme catalyses (4R,5S)-dethiobiotin + (sulfur carrier)-SH + 2 reduced [2Fe-2S]-[ferredoxin] + 2 S-adenosyl-L-methionine = (sulfur carrier)-H + biotin + 2 5'-deoxyadenosine + 2 L-methionine + 2 oxidized [2Fe-2S]-[ferredoxin]. The protein operates within cofactor biosynthesis; biotin biosynthesis; biotin from 7,8-diaminononanoate: step 2/2. Catalyzes the conversion of dethiobiotin (DTB) to biotin by the insertion of a sulfur atom into dethiobiotin via a radical-based mechanism. The protein is Biotin synthase of Sulfurovum sp. (strain NBC37-1).